The sequence spans 346 residues: UDP-3-O-acylglucosamine N-acyltransferase (346 aa).

The active-site Proton acceptor is the H240.

It belongs to the transferase hexapeptide repeat family. LpxD subfamily. In terms of assembly, homotrimer.

It carries out the reaction a UDP-3-O-[(3R)-3-hydroxyacyl]-alpha-D-glucosamine + a (3R)-hydroxyacyl-[ACP] = a UDP-2-N,3-O-bis[(3R)-3-hydroxyacyl]-alpha-D-glucosamine + holo-[ACP] + H(+). It functions in the pathway bacterial outer membrane biogenesis; LPS lipid A biosynthesis. Its function is as follows. Catalyzes the N-acylation of UDP-3-O-acylglucosamine using 3-hydroxyacyl-ACP as the acyl donor. Is involved in the biosynthesis of lipid A, a phosphorylated glycolipid that anchors the lipopolysaccharide to the outer membrane of the cell. In Bacteroides thetaiotaomicron (strain ATCC 29148 / DSM 2079 / JCM 5827 / CCUG 10774 / NCTC 10582 / VPI-5482 / E50), this protein is UDP-3-O-acylglucosamine N-acyltransferase.